The following is a 671-amino-acid chain: MGNFKIYTSFKPKGDQPKAIKQLVEGIKKGYKHQVLLGVTGSGKTFTIANVIEKVNKPTLVIAHNKTLAAQLYGELKELFPYNAVEYYVSYYDYYQPEAYIPETDTYIEKDALINDDIDRMRHSATLSVLTRQDVIVVASVSCIYGIGSPDDYMSMHVTLEEGMKTERDAMLKKLVEILYIRAEEEFRRGAFRVRGDVVDIFASHCLDKAYRVEFFDDEIDAIYEIDPLTGSRQKRLQRIFIPPNSHWVTPEPRLKKALETIEEELQERIKYFKERGEELFAERIEKRTRFDMELLSQFGHCHGIENYSRHLSGRLPGEPPFTLIDYIYAGPSKGDFLTVIDESHVTVPQIGGMYEGDRSRKQTLVEYGFRLPSALDNRPLTFKEFEHRMNYVIYVSATPGDYEIEKSGGRIVEQIIRPTGLVDPKIEVRPATNQVEDLLEEIHKRVSRGERVLVTTITKKMAEDLTDYYTTVGIKAKYLHSDIDTLERVEILKDLRLGKFDVLIGVNLLREGLDLPEVSLVAIFDADKEGFLRSERSLIQTAGRASRNINGTVIFYADTVTDSMKKAIEETERRREIQMKYNKKNGISPETVKSKIKDILSSIYEKDYVTVDVVKEEAEEYELNEETIKKLEQEMKHAAENLEFEKAAEIRDKIFKIKEKMLKLGMKLTV.

Positions 25–178 (EGIKKGYKHQ…DAMLKKLVEI (154 aa)) constitute a Helicase ATP-binding domain. 38–45 (GVTGSGKT) is a binding site for ATP. Positions 91 to 114 (YYDYYQPEAYIPETDTYIEKDALI) match the Beta-hairpin motif. The 167-residue stretch at 435-601 (QVEDLLEEIH…TVKSKIKDIL (167 aa)) folds into the Helicase C-terminal domain. The 36-residue stretch at 626–661 (EETIKKLEQEMKHAAENLEFEKAAEIRDKIFKIKEK) folds into the UVR domain.

This sequence belongs to the UvrB family. As to quaternary structure, forms a heterotetramer with UvrA during the search for lesions. Interacts with UvrC in an incision complex.

The protein localises to the cytoplasm. In terms of biological role, the UvrABC repair system catalyzes the recognition and processing of DNA lesions. A damage recognition complex composed of 2 UvrA and 2 UvrB subunits scans DNA for abnormalities. Upon binding of the UvrA(2)B(2) complex to a putative damaged site, the DNA wraps around one UvrB monomer. DNA wrap is dependent on ATP binding by UvrB and probably causes local melting of the DNA helix, facilitating insertion of UvrB beta-hairpin between the DNA strands. Then UvrB probes one DNA strand for the presence of a lesion. If a lesion is found the UvrA subunits dissociate and the UvrB-DNA preincision complex is formed. This complex is subsequently bound by UvrC and the second UvrB is released. If no lesion is found, the DNA wraps around the other UvrB subunit that will check the other stand for damage. The sequence is that of UvrABC system protein B from Thermodesulfovibrio yellowstonii (strain ATCC 51303 / DSM 11347 / YP87).